We begin with the raw amino-acid sequence, 283 residues long: Quinate/shikimate dehydrogenase (NAD(+)) (283 aa).

Residues Ser-17, Thr-69, Lys-73, Asn-94, and Asp-110 each contribute to the shikimate site. Residues 17–19 (SRT), Thr-69, Lys-73, Asn-94, and Asp-110 each bind L-quinate. Catalysis depends on Lys-73, which acts as the Proton acceptor. Residues 137 to 138 (GV), Asp-158, Arg-163, 203 to 206 (PMGM), Ala-213, Val-228, and Gly-251 each bind NAD(+). Gln-258 is a binding site for shikimate. Position 258 (Gln-258) interacts with L-quinate.

The protein belongs to the shikimate dehydrogenase family. Homodimer.

It carries out the reaction L-quinate + NAD(+) = 3-dehydroquinate + NADH + H(+). The catalysed reaction is shikimate + NAD(+) = 3-dehydroshikimate + NADH + H(+). It functions in the pathway metabolic intermediate biosynthesis; chorismate biosynthesis; chorismate from D-erythrose 4-phosphate and phosphoenolpyruvate: step 4/7. It participates in aromatic compound metabolism; 3,4-dihydroxybenzoate biosynthesis; 3-dehydroquinate from D-quinate (NAD(+) route). Functionally, involved in the biosynthesis of the chorismate, which leads to the biosynthesis of aromatic amino acids, and plays a key role in the quinate degradation pathway. Catalyzes the NAD(+)-dependent oxidation of both quinate and shikimate to 3-dehydroquinate and 3-dehydroshikimate, respectively. It can only use NAD. This is Quinate/shikimate dehydrogenase (NAD(+)) from Corynebacterium glutamicum (strain ATCC 13032 / DSM 20300 / JCM 1318 / BCRC 11384 / CCUG 27702 / LMG 3730 / NBRC 12168 / NCIMB 10025 / NRRL B-2784 / 534).